The sequence spans 155 residues: 17.6 kDa class II heat shock protein (155 aa).

Positions 38–155 (DAKAMAATPA…KPKTIQVQVA (118 aa)) constitute a sHSP domain.

This sequence belongs to the small heat shock protein (HSP20) family. As to quaternary structure, may form oligomeric structures.

It is found in the cytoplasm. This is 17.6 kDa class II heat shock protein (HSP17.6) from Arabidopsis thaliana (Mouse-ear cress).